A 111-amino-acid chain; its full sequence is Urease subunit beta (111 aa).

The protein belongs to the urease beta subunit family. As to quaternary structure, heterotrimer of UreA (gamma), UreB (beta) and UreC (alpha) subunits. Three heterotrimers associate to form the active enzyme.

It localises to the cytoplasm. It carries out the reaction urea + 2 H2O + H(+) = hydrogencarbonate + 2 NH4(+). Its pathway is nitrogen metabolism; urea degradation; CO(2) and NH(3) from urea (urease route): step 1/1. This Psychrobacter cryohalolentis (strain ATCC BAA-1226 / DSM 17306 / VKM B-2378 / K5) protein is Urease subunit beta.